Consider the following 176-residue polypeptide: ATP-dependent protease subunit HslV (176 aa).

Thr-2 is an active-site residue. The Na(+) site is built by Gly-157, Cys-160, and Thr-163.

Belongs to the peptidase T1B family. HslV subfamily. In terms of assembly, a double ring-shaped homohexamer of HslV is capped on each side by a ring-shaped HslU homohexamer. The assembly of the HslU/HslV complex is dependent on binding of ATP.

It localises to the cytoplasm. It catalyses the reaction ATP-dependent cleavage of peptide bonds with broad specificity.. Its activity is regulated as follows. Allosterically activated by HslU binding. Its function is as follows. Protease subunit of a proteasome-like degradation complex believed to be a general protein degrading machinery. The chain is ATP-dependent protease subunit HslV from Pseudomonas savastanoi pv. phaseolicola (strain 1448A / Race 6) (Pseudomonas syringae pv. phaseolicola (strain 1448A / Race 6)).